The sequence spans 388 residues: Succinate--CoA ligase [ADP-forming] subunit beta (388 aa).

Positions 9–244 (KEILRKYNVP…LDEEDPAEIE (236 aa)) constitute an ATP-grasp domain. ATP is bound by residues K46, 53-55 (GRG), E99, A102, and E107. Mg(2+)-binding residues include N199 and D213. Substrate contacts are provided by residues N264 and 321-323 (GIM).

This sequence belongs to the succinate/malate CoA ligase beta subunit family. In terms of assembly, heterotetramer of two alpha and two beta subunits. It depends on Mg(2+) as a cofactor.

The catalysed reaction is succinate + ATP + CoA = succinyl-CoA + ADP + phosphate. The enzyme catalyses GTP + succinate + CoA = succinyl-CoA + GDP + phosphate. The protein operates within carbohydrate metabolism; tricarboxylic acid cycle; succinate from succinyl-CoA (ligase route): step 1/1. Its function is as follows. Succinyl-CoA synthetase functions in the citric acid cycle (TCA), coupling the hydrolysis of succinyl-CoA to the synthesis of either ATP or GTP and thus represents the only step of substrate-level phosphorylation in the TCA. The beta subunit provides nucleotide specificity of the enzyme and binds the substrate succinate, while the binding sites for coenzyme A and phosphate are found in the alpha subunit. The chain is Succinate--CoA ligase [ADP-forming] subunit beta from Ralstonia pickettii (strain 12J).